A 209-amino-acid chain; its full sequence is Uracil phosphoribosyltransferase (209 aa).

Residues R79, R104, and 131–139 (DPMLATGGS) each bind 5-phospho-alpha-D-ribose 1-diphosphate. Uracil-binding positions include I194 and 199 to 201 (GDA). D200 contributes to the 5-phospho-alpha-D-ribose 1-diphosphate binding site.

Belongs to the UPRTase family. Mg(2+) is required as a cofactor.

The catalysed reaction is UMP + diphosphate = 5-phospho-alpha-D-ribose 1-diphosphate + uracil. It functions in the pathway pyrimidine metabolism; UMP biosynthesis via salvage pathway; UMP from uracil: step 1/1. With respect to regulation, allosterically activated by GTP. Functionally, catalyzes the conversion of uracil and 5-phospho-alpha-D-ribose 1-diphosphate (PRPP) to UMP and diphosphate. This Clostridium novyi (strain NT) protein is Uracil phosphoribosyltransferase.